The chain runs to 89 residues: Small ribosomal subunit protein uS15 (89 aa).

The protein belongs to the universal ribosomal protein uS15 family. Part of the 30S ribosomal subunit. Forms a bridge to the 50S subunit in the 70S ribosome, contacting the 23S rRNA.

One of the primary rRNA binding proteins, it binds directly to 16S rRNA where it helps nucleate assembly of the platform of the 30S subunit by binding and bridging several RNA helices of the 16S rRNA. Functionally, forms an intersubunit bridge (bridge B4) with the 23S rRNA of the 50S subunit in the ribosome. The polypeptide is Small ribosomal subunit protein uS15 (Acinetobacter baylyi (strain ATCC 33305 / BD413 / ADP1)).